The sequence spans 521 residues: Calcium-dependent protein kinase 33 (521 aa).

The N-myristoyl glycine moiety is linked to residue Gly-2. The disordered stretch occupies residues 15-56; the sequence is PQQNGERSVEIENRRRSTHQDPSKISTGTNQPPPWRNPAKHS. Basic and acidic residues predominate over residues 21 to 36; that stretch reads RSVEIENRRRSTHQDP. The region spanning 73 to 331 is the Protein kinase domain; sequence YTLSKELGRG…AAEVLKHPWL (259 aa). Residues 79 to 87 and Lys-102 each bind ATP; that span reads LGRGQFGVT. Catalysis depends on Asp-197, which acts as the Proton acceptor. Ser-237 bears the Phosphoserine mark. Positions 337–367 are autoinhibitory domain; sequence ASDKPIDSAVLSRMKQFRAMNKLKKLALKVI. EF-hand domains are found at residues 374 to 409, 410 to 445, 446 to 481, and 482 to 516; these read EEIQ…LGSR, LTEA…RHRL, ESNE…YGMG, and DDAT…GNPQ. Ca(2+)-binding residues include Asp-387, Asp-389, Ser-391, Thr-393, Glu-398, Asp-423, Asp-425, Asn-427, Ser-429, Glu-434, Asp-459, Asp-461, Ser-463, Tyr-465, Glu-470, Asp-494, Asp-496, Asp-498, Arg-500, and Glu-505.

It belongs to the protein kinase superfamily. Ser/Thr protein kinase family. CDPK subfamily. As to quaternary structure, interacts with THI1. Interacts with FD and FDP. In terms of processing, autophosphorylated. Expressed in primary roots, leaves, inflorescences, siliques and guard cells. Expressed in the shoot apical meristem.

The protein resides in the cell membrane. It localises to the nucleus. Its subcellular location is the cytoplasm. The catalysed reaction is L-seryl-[protein] + ATP = O-phospho-L-seryl-[protein] + ADP + H(+). It catalyses the reaction L-threonyl-[protein] + ATP = O-phospho-L-threonyl-[protein] + ADP + H(+). Its activity is regulated as follows. Activated by calcium. Autophosphorylation may play an important role in the regulation of the kinase activity. Repressed by THI1 through a negative regulation of the autophosphorylation activity in the presence of Ca(2+). Its function is as follows. Ca(2+)-dependent protein kinase. Negative regulator of stomatal closure and slow anion currents. Unable to phosphorylate THI1 in vitro, but the kinase activity is essential for the stomatal closure regulation. Phosphorylates FD. May play a role in signal transduction pathways that involve calcium as a second messenger. The sequence is that of Calcium-dependent protein kinase 33 from Arabidopsis thaliana (Mouse-ear cress).